The primary structure comprises 266 residues: Hydroxyethylthiazole kinase (266 aa).

M43 is a substrate binding site. Positions 119 and 166 each coordinate ATP. A substrate-binding site is contributed by G193.

It belongs to the Thz kinase family. The cofactor is Mg(2+).

The catalysed reaction is 5-(2-hydroxyethyl)-4-methylthiazole + ATP = 4-methyl-5-(2-phosphooxyethyl)-thiazole + ADP + H(+). It participates in cofactor biosynthesis; thiamine diphosphate biosynthesis; 4-methyl-5-(2-phosphoethyl)-thiazole from 5-(2-hydroxyethyl)-4-methylthiazole: step 1/1. Functionally, catalyzes the phosphorylation of the hydroxyl group of 4-methyl-5-beta-hydroxyethylthiazole (THZ). The chain is Hydroxyethylthiazole kinase from Methanococcus maripaludis (strain C6 / ATCC BAA-1332).